The primary structure comprises 430 residues: MAFEFRLPDIGEGIHEGEIVKWFVKAGDTIEEDDVLAEVQNDKSVVEIPSPVSGTVEEVMVEEGTVAVVGDVIVKIDAPDAEDMQFKGHDDDSSSKEEPAKEEAPAEQAPVATQTEEVDENRTVKAMPSVRKYAREKGVNIKAVSGSGKNGRITKEDVDAYLNGGAPTASNESAASATNEEVAETPAAPAAVSLEGDFPETTEKIPAMRRAIAKAMVNSKHTAPHVTLMDEIDVQALWDHRKKFKEIAAEQGTKLTFLPYVVKALVSALKKYPALNTSFNEEAGEIVHKHYWNIGIAADTDRGLLVPVVKHADRKSIFQISDEINELAVKARDGKLTADEMKGATCTISNIGSAGGQWFTPVINHPEVAILGIGRIAQKPIVKDGEIVAAPVLALSLSFDHRQIDGATGQNAMNHIKRLLNNPELLLMEG.

Residues 2-77 (AFEFRLPDIG…VVGDVIVKID (76 aa)) enclose the Lipoyl-binding domain. K43 carries the post-translational modification N6-lipoyllysine. The disordered stretch occupies residues 80–122 (DAEDMQFKGHDDDSSSKEEPAKEEAPAEQAPVATQTEEVDENR). Positions 84–104 (MQFKGHDDDSSSKEEPAKEEA) are enriched in basic and acidic residues. Residues 125–162 (KAMPSVRKYAREKGVNIKAVSGSGKNGRITKEDVDAYL) form the Peripheral subunit-binding (PSBD) domain. Positions 165 to 199 (GAPTASNESAASATNEEVAETPAAPAAVSLEGDFP) are disordered. A compositionally biased stretch (low complexity) spans 168–192 (TASNESAASATNEEVAETPAAPAAV). Residue H401 is part of the active site.

Belongs to the 2-oxoacid dehydrogenase family. Forms a 24-polypeptide structural core with octahedral symmetry. The cofactor is (R)-lipoate.

The enzyme catalyses N(6)-[(R)-dihydrolipoyl]-L-lysyl-[protein] + acetyl-CoA = N(6)-[(R)-S(8)-acetyldihydrolipoyl]-L-lysyl-[protein] + CoA. Its function is as follows. The pyruvate dehydrogenase complex catalyzes the overall conversion of pyruvate to acetyl-CoA and CO(2). It contains multiple copies of three enzymatic components: pyruvate dehydrogenase (E1), dihydrolipoamide acetyltransferase (E2) and lipoamide dehydrogenase (E3). The protein is Dihydrolipoyllysine-residue acetyltransferase component of pyruvate dehydrogenase complex (pdhC) of Staphylococcus aureus (strain MRSA252).